Here is a 492-residue protein sequence, read N- to C-terminus: Cytochrome P450 2B19 (492 aa).

At Ser-129 the chain carries Phosphoserine; by PKA. Cys-437 contacts heme.

The protein belongs to the cytochrome P450 family. Heme serves as cofactor. As to expression, expressed only in differentiated keratinocytes in skin.

The protein resides in the endoplasmic reticulum membrane. It localises to the microsome membrane. The enzyme catalyses an organic molecule + reduced [NADPH--hemoprotein reductase] + O2 = an alcohol + oxidized [NADPH--hemoprotein reductase] + H2O + H(+). Its function is as follows. Cytochromes P450 are a group of heme-thiolate monooxygenases. In liver microsomes, this enzyme is involved in an NADPH-dependent electron transport pathway. It oxidizes a variety of structurally unrelated compounds, including steroids, fatty acids, and xenobiotics. The polypeptide is Cytochrome P450 2B19 (Cyp2b19) (Mus musculus (Mouse)).